The sequence spans 338 residues: Ketol-acid reductoisomerase (NADP(+)) (338 aa).

A KARI N-terminal Rossmann domain is found at 1–181 (MQIFYDKDCD…GGGRTGIIET (181 aa)). Residues 24–27 (YGSQ), Arg-47, Ser-50, Ser-52, and 82–85 (DEFQ) each bind NADP(+). His-107 is an active-site residue. Gly-133 contacts NADP(+). Residues 182–327 (SFREETETDL…SKLRAMMPWI (146 aa)) form the KARI C-terminal knotted domain. Positions 190, 194, 226, and 230 each coordinate Mg(2+). Residue Ser-251 participates in substrate binding.

It belongs to the ketol-acid reductoisomerase family. Mg(2+) serves as cofactor.

The catalysed reaction is (2R)-2,3-dihydroxy-3-methylbutanoate + NADP(+) = (2S)-2-acetolactate + NADPH + H(+). The enzyme catalyses (2R,3R)-2,3-dihydroxy-3-methylpentanoate + NADP(+) = (S)-2-ethyl-2-hydroxy-3-oxobutanoate + NADPH + H(+). Its pathway is amino-acid biosynthesis; L-isoleucine biosynthesis; L-isoleucine from 2-oxobutanoate: step 2/4. It functions in the pathway amino-acid biosynthesis; L-valine biosynthesis; L-valine from pyruvate: step 2/4. In terms of biological role, involved in the biosynthesis of branched-chain amino acids (BCAA). Catalyzes an alkyl-migration followed by a ketol-acid reduction of (S)-2-acetolactate (S2AL) to yield (R)-2,3-dihydroxy-isovalerate. In the isomerase reaction, S2AL is rearranged via a Mg-dependent methyl migration to produce 3-hydroxy-3-methyl-2-ketobutyrate (HMKB). In the reductase reaction, this 2-ketoacid undergoes a metal-dependent reduction by NADPH to yield (R)-2,3-dihydroxy-isovalerate. The chain is Ketol-acid reductoisomerase (NADP(+)) from Acinetobacter baylyi (strain ATCC 33305 / BD413 / ADP1).